A 102-amino-acid polypeptide reads, in one-letter code: Phosphoribosyl-ATP pyrophosphatase (102 aa).

The protein belongs to the PRA-PH family.

The protein resides in the cytoplasm. It catalyses the reaction 1-(5-phospho-beta-D-ribosyl)-ATP + H2O = 1-(5-phospho-beta-D-ribosyl)-5'-AMP + diphosphate + H(+). It functions in the pathway amino-acid biosynthesis; L-histidine biosynthesis; L-histidine from 5-phospho-alpha-D-ribose 1-diphosphate: step 2/9. The polypeptide is Phosphoribosyl-ATP pyrophosphatase (Jannaschia sp. (strain CCS1)).